Reading from the N-terminus, the 83-residue chain is Small ribosomal subunit protein bS16 (83 aa).

It belongs to the bacterial ribosomal protein bS16 family.

This Acinetobacter baumannii (strain AB307-0294) protein is Small ribosomal subunit protein bS16.